Consider the following 328-residue polypeptide: MSHVELQPGFDFQQAGKEVLAIERECLAELDQYINQNFTLACEKMFWCKGKVVVMGMGKSGHIGRKMAATFASTGTPSFFVHPGEAAHGDLGMVTPQDVVIAISNSGESSEITALIPVLKRLHVPLICITGRPESSMARAADVHLCVKVAKEACPLGLAPTSSTTATLVMGDALAVALLKARGFTAEDFALSHPGGALGRKLLLRVNDIMHTGDEIPHVKKTASLRDALLEVTRKNLGMTVICDDNMMIEGIFTDGDLRRVFDMGVDVRQLSIADVMTPGGIRVRPGILAVEALNLMQSRHITSVMVADGDHLLGVLHMHDLLRAGVV.

One can recognise an SIS domain in the interval 42–184; sequence CEKMFWCKGK…AVALLKARGF (143 aa). Substrate contacts are provided by residues 75–76, H82, H88, 114–123, 148–150, T222, and D275; these read GT, ALIPVLKRLH, and KVA. Residue H82 coordinates Zn(2+). The region spanning 210–268 is the CBS 1 domain; sequence MHTGDEIPHVKKTASLRDALLEVTRKNLGMTVICDDNMMIEGIFTDGDLRRVFDMGVDV. Residues 277–328 form the CBS 2 domain; sequence MTPGGIRVRPGILAVEALNLMQSRHITSVMVADGDHLLGVLHMHDLLRAGVV.

The protein belongs to the SIS family. GutQ/KpsF subfamily. Homotetramer.

It carries out the reaction D-arabinose 5-phosphate = D-ribulose 5-phosphate. It functions in the pathway carbohydrate biosynthesis; 3-deoxy-D-manno-octulosonate biosynthesis; 3-deoxy-D-manno-octulosonate from D-ribulose 5-phosphate: step 1/3. Its pathway is bacterial outer membrane biogenesis; lipopolysaccharide biosynthesis. With respect to regulation, completely inhibited by 10 uM of nickel, copper, cadmium and mercury ions. Inhibited by zinc with an IC(50) of 1-3 uM. Metal ion inhibition may be a mechanism to control activity in vivo. Functionally, involved in the biosynthesis of 3-deoxy-D-manno-octulosonate (KDO), a unique 8-carbon sugar component of lipopolysaccharides (LPSs). KdsD is not essential in the KDO biosynthesis and can be substituted by GutQ. Catalyzes the reversible aldol-ketol isomerization between D-ribulose 5-phosphate (Ru5P) and D-arabinose 5-phosphate (A5P). The chain is Arabinose 5-phosphate isomerase KdsD (kdsD) from Escherichia coli (strain K12).